The following is a 406-amino-acid chain: Leucine aminopeptidase 1 (406 aa).

A signal peptide spans 1-18 (MKVTNASLLALLLPAVSG). A propeptide spanning residues 19-94 (RFVETGEPDR…LRAMTASRKK (76 aa)) is cleaved from the precursor. N-linked (GlcNAc...) asparagine glycosylation occurs at Asn-186. Residues His-194, Asp-213, Glu-252, and Asp-279 each contribute to the Zn(2+) site. The N-linked (GlcNAc...) asparagine glycan is linked to Asn-306. Residues Cys-328 and Cys-332 are joined by a disulfide bond. Residue His-361 coordinates Zn(2+).

It belongs to the peptidase M28 family. M28E subfamily. As to quaternary structure, monomer. The cofactor is Zn(2+).

The protein resides in the secreted. Its function is as follows. Extracellular aminopeptidase that allows assimilation of proteinaceous substrates. In Chaetomium globosum (strain ATCC 6205 / CBS 148.51 / DSM 1962 / NBRC 6347 / NRRL 1970) (Soil fungus), this protein is Leucine aminopeptidase 1 (LAP1).